Reading from the N-terminus, the 636-residue chain is Putative lipase ATG15 (636 aa).

The Cytoplasmic segment spans residues 1–19 (MYKYGTVVDPAMTTNRRSR). A helical; Signal-anchor for type II membrane protein membrane pass occupies residues 20-42 (LSGFRCASTARVTATLLLSFLAF). Residues 43–636 (SPSSASSDFG…DDLEFATDEM (594 aa)) are Lumenal-facing. N-linked (GlcNAc...) asparagine glycans are attached at residues Asn211, Asn233, Asn291, Asn315, and Asn477. Positions 478 to 500 (GTETTTTSSPSTTSTTRTRTRTS) are disordered. The span at 479 to 500 (TETTTTSSPSTTSTTRTRTRTS) shows a compositional bias: low complexity.

Belongs to the AB hydrolase superfamily. Lipase family. In terms of assembly, binds to both phosphatidylinositol (PI) and phosphatidylinositol 3,5-bisphosphate (PIP2).

The protein localises to the endosome. It is found in the multivesicular body membrane. It localises to the prevacuolar compartment membrane. It catalyses the reaction a triacylglycerol + H2O = a diacylglycerol + a fatty acid + H(+). Functionally, lipase which is essential for lysis of subvacuolar cytoplasm to vacuole targeted bodies and intravacuolar autophagic bodies. Involved in the lysis of intravacuolar multivesicular body (MVB) vesicles. The intravacuolar membrane disintegration by ATG15 is critical to life span extension. Autophagy is required for proper vegetative growth, asexual/sexual reproduction, and full virulence. Autophagy is particularly involved in the biosynthesis of deoxynivalenol (DON), an important virulence determinant. The chain is Putative lipase ATG15 from Gibberella zeae (strain ATCC MYA-4620 / CBS 123657 / FGSC 9075 / NRRL 31084 / PH-1) (Wheat head blight fungus).